Reading from the N-terminus, the 417-residue chain is Interferon-gamma-inducible GTPase 10 (417 aa).

Glycine 2 carries the N-myristoyl glycine lipid modification. The IRG-type G domain occupies 67 to 249 (APLNIAVTGE…PSLESTLLEE (183 aa)). GDP is bound by residues glycine 78, alanine 79, serine 82, threonine 83, serine 101, lysine 183, aspartate 185, and serine 231. Transmembrane regions (helical) follow at residues 284–302 (EALK…FFND) and 370–387 (AVTG…KSYY).

It belongs to the TRAFAC class dynamin-like GTPase superfamily. GB1/RHD3 GTPase family. GB1 subfamily. Homooligomer; homooligomerization occurs upon GTP-binding and is required for the association with membranous structures. Homodimer; GDP-binding induces formation of an inactive head-to-head homodimer. In terms of processing, myristoylation is required for localization to pathogen-containing vacuoles. (Microbial infection) Phosphorylated by Toxoplasma gondii ROP18.

The protein localises to the membrane. The protein resides in the cytoplasmic vesicle membrane. The enzyme catalyses GTP + H2O = GDP + phosphate + H(+). Its function is as follows. Interferon (IFN)-inducible GTPase that plays important roles in innate immunity against a diverse range of bacterial, viral and protozoan pathogens by mediating cytosolic release of pathogenic ligands that activate the inflammasomes. Following infection, recruited to the membrane of pathogens in a GBP-dependent manner and mediates disruption of the pathogen membrane, liberating ligands that are detected by inflammasomes, such as lipopolysaccharide (LPS) that activates the non-canonical CASP4/CASP11 inflammasome or double-stranded DNA (dsDNA) that activates the AIM2 inflammasome. Promotes AIM2 and NLRP3 inflammasome activation following A.fumigatus infection by liberating beta-glucan, which directly triggers inflammasome assembly. Promotes NLRP3 inflammasome activation following influenza A virus infection. This Mus musculus (Mouse) protein is Interferon-gamma-inducible GTPase 10.